We begin with the raw amino-acid sequence, 91 residues long: Small ribosomal subunit protein uS19 (91 aa).

Belongs to the universal ribosomal protein uS19 family.

Protein S19 forms a complex with S13 that binds strongly to the 16S ribosomal RNA. This is Small ribosomal subunit protein uS19 from Delftia acidovorans (strain DSM 14801 / SPH-1).